Reading from the N-terminus, the 512-residue chain is GMP synthase [glutamine-hydrolyzing] (512 aa).

Positions 3–196 (NILILDFGSQ…VKHICQASET (194 aa)) constitute a Glutamine amidotransferase type-1 domain. The active-site Nucleophile is the Cys-80. Residues His-169 and Glu-171 contribute to the active site. The GMPS ATP-PPase domain maps to 197–387 (WKIETIEKQL…LGLPDVLISR (191 aa)). 225–231 (SGGVDSS) contacts ATP.

As to quaternary structure, homodimer.

It catalyses the reaction XMP + L-glutamine + ATP + H2O = GMP + L-glutamate + AMP + diphosphate + 2 H(+). It participates in purine metabolism; GMP biosynthesis; GMP from XMP (L-Gln route): step 1/1. Functionally, catalyzes the synthesis of GMP from XMP. This chain is GMP synthase [glutamine-hydrolyzing], found in Chlamydia caviae (strain ATCC VR-813 / DSM 19441 / 03DC25 / GPIC) (Chlamydophila caviae).